A 381-amino-acid polypeptide reads, in one-letter code: Alkanesulfonate monooxygenase (381 aa).

The protein belongs to the SsuD family. Homotetramer.

The enzyme catalyses an alkanesulfonate + FMNH2 + O2 = an aldehyde + FMN + sulfite + H2O + 2 H(+). Its function is as follows. Catalyzes the desulfonation of aliphatic sulfonates. This is Alkanesulfonate monooxygenase from Escherichia coli O127:H6 (strain E2348/69 / EPEC).